The sequence spans 1207 residues: RNA-binding protein 20 (1207 aa).

Residues 1–58 (MVLAAAMSQDADPSGPEQPDRDACIVPGVQGPPAPQGQQGMQPLPPPLPPPPQPQSSL) are disordered. The span at 43–54 (PLPPPLPPPPQP) shows a compositional bias: pro residues. The U1-type zinc finger occupies 412–446 (HLPHICSICDKKVFDLKDWELHVKGKLHAQKCLLF). In terms of domain architecture, RRM spans 521–596 (RVVHICNLPE…EKLLIRMSTR (76 aa)). The span at 625–637 (LREADRYGPERPR) shows a compositional bias: basic and acidic residues. Disordered stretches follow at residues 625–686 (LREA…NGED), 722–896 (EKYL…MEEL), and 951–1110 (QGET…AELK). Residues 631–650 (YGPERPRSRSPMSRSLSPRS) are RS. Phosphoserine occurs at positions 638, 640, 643, 645, and 652. Residues 639 to 650 (RSPMSRSLSPRS) are compositionally biased toward low complexity. A compositionally biased stretch (basic and acidic residues) spans 668 to 686 (YAWRDEDRETVPRRENGED). Ser729 carries the post-translational modification Phosphoserine. Composition is skewed to basic and acidic residues over residues 740 to 759 (KGREDGYHRKETKAKLDKHP), 772 to 789 (RKEEARLREPRHPHPEDS), and 796 to 836 (EPKV…RGAE). A Phosphoserine modification is found at Ser789. Positions 839-848 (AGTEEQEGME) are enriched in acidic residues. Phosphoserine is present on residues Ser853 and Ser864. Over residues 853-863 (SVGTQQEGTES) the composition is skewed to polar residues. Basic and acidic residues predominate over residues 867–876 (ENTRTKKGQD). 3 positions are modified to phosphoserine: Ser879, Ser881, and Ser963. The span at 970 to 979 (VPSTSTSCPN) shows a compositional bias: polar residues. A Phosphoserine modification is found at Ser999. The segment covering 1011–1022 (YEKEARGAEGSD) has biased composition (basic and acidic residues). 7 positions are modified to phosphoserine: Ser1034, Ser1046, Ser1057, Ser1066, Ser1078, Ser1096, and Ser1101. Residues 1050–1072 (DDCKARGSPEDGPHEVSPLEEKA) show a composition bias toward basic and acidic residues. The segment covering 1073–1102 (SPTTESDLQSQACQENSRYTETRSLNSRSP) has biased composition (polar residues). The segment at 1141–1172 (FYCKLCGLFYTSEEAAKVSHCRSTVHYRNLQK) adopts a Matrin-type zinc-finger fold. The disordered stretch occupies residues 1181–1207 (GLKETEGVDSPSPERSGIGPHLERKKL). Phosphoserine is present on residues Ser1190 and Ser1192.

As to quaternary structure, associates with components of the U1 and U2 U1 small nuclear ribonucleoprotein complexes. Phosphorylation regulates the subcellular localization. Phosphorylation of Ser-638 and Ser-640 in the RS (arginine/serine-rich) region promotes nuclear localization of the protein. In contrast, phosphorylation of the C-terminal disordered region promotes localization to cytoplasmic ribonucleoprotein granules.

It localises to the nucleus. It is found in the cytoplasm. Its subcellular location is the cytoplasmic ribonucleoprotein granule. Functionally, RNA-binding protein that acts as a regulator of mRNA splicing of a subset of genes encoding key structural proteins involved in cardiac development, such as TTN (Titin), CACNA1C, CAMK2D or PDLIM5/ENH. Acts as a repressor of mRNA splicing: specifically binds the 5'UCUU-3' motif that is predominantly found within intronic sequences of pre-mRNAs, leading to the exclusion of specific exons in target transcripts. RBM20-mediated exon skipping is hormone-dependent and is essential for TTN isoform transition in both cardiac and skeletal muscles. RBM20-mediated exon skipping of TTN provides substrates for the formation of circular RNA (circRNAs) from the TTN transcripts. Together with RBM24, promotes the expression of short isoforms of PDLIM5/ENH in cardiomyocytes. This chain is RNA-binding protein 20, found in Rattus norvegicus (Rat).